Reading from the N-terminus, the 78-residue chain is Large ribosomal subunit protein bL28 (78 aa).

Belongs to the bacterial ribosomal protein bL28 family.

The protein is Large ribosomal subunit protein bL28 of Synechococcus sp. (strain JA-2-3B'a(2-13)) (Cyanobacteria bacterium Yellowstone B-Prime).